We begin with the raw amino-acid sequence, 146 residues long: Large ribosomal subunit protein uL15 (146 aa).

Positions 1–18 (MKLHELKPSEGSRKERNR) are enriched in basic and acidic residues. The disordered stretch occupies residues 1-50 (MKLHELKPSEGSRKERNRVGRGTGSGNGKTSGRGHKGQKARSGGGVRLGF). Gly residues predominate over residues 21–31 (RGTGSGNGKTS).

It belongs to the universal ribosomal protein uL15 family. Part of the 50S ribosomal subunit.

Binds to the 23S rRNA. The polypeptide is Large ribosomal subunit protein uL15 (Listeria welshimeri serovar 6b (strain ATCC 35897 / DSM 20650 / CCUG 15529 / CIP 8149 / NCTC 11857 / SLCC 5334 / V8)).